The sequence spans 436 residues: 3-ketoacyl-CoA thiolase (436 aa).

Residue Cys99 is the Acyl-thioester intermediate of the active site. Catalysis depends on proton acceptor residues His392 and Cys422.

This sequence belongs to the thiolase-like superfamily. Thiolase family. In terms of assembly, heterotetramer of two alpha chains (FadJ) and two beta chains (FadI).

The protein resides in the cytoplasm. The enzyme catalyses an acyl-CoA + acetyl-CoA = a 3-oxoacyl-CoA + CoA. The protein operates within lipid metabolism; fatty acid beta-oxidation. Catalyzes the final step of fatty acid oxidation in which acetyl-CoA is released and the CoA ester of a fatty acid two carbons shorter is formed. This chain is 3-ketoacyl-CoA thiolase, found in Shewanella woodyi (strain ATCC 51908 / MS32).